A 641-amino-acid polypeptide reads, in one-letter code: Sodium-dependent nutrient amino acid transporter 1 (641 aa).

Residues 1–36 (MELKGVQPSNGSANGNGTTNAASTEKTDAEKHTPER) form a disordered region. Residues 1–38 (MELKGVQPSNGSANGNGTTNAASTEKTDAEKHTPERTN) are Cytoplasmic-facing. Residues 9 to 24 (SNGSANGNGTTNAAST) show a composition bias toward low complexity. A compositionally biased stretch (basic and acidic residues) spans 25-35 (EKTDAEKHTPE). 3 helical membrane passes run 39–59 (WGNG…LGNV), 72–92 (GAFL…MYYL), and 109–129 (SVVP…ICII). Asn-183 and Asn-188 each carry an N-linked (GlcNAc...) asparagine glycan. 9 consecutive transmembrane segments (helical) span residues 229-249 (PDWK…LVIM), 258-278 (AAYF…IRAV), 307-327 (AVVQ…MFAS), 341-361 (IVTT…FAIL), 401-421 (LFSV…IVAL), 441-461 (VALI…TPGG), 474-494 (TYVV…VYGL), 516-536 (CWSF…MVTI), and 552-572 (IAGW…GLWY).

The protein belongs to the sodium:neurotransmitter symporter (SNF) (TC 2.A.22) family.

The protein localises to the membrane. Its function is as follows. Unusual broad substrate spectrum amino acid:sodium cotransporter that promotes absorption of the D isomers of essential amino acids. Neutral amino acids are the preferred substrates, especially methionine and phenylalanine. The protein is Sodium-dependent nutrient amino acid transporter 1 of Drosophila erecta (Fruit fly).